The following is a 99-amino-acid chain: C-C motif chemokine 17 (99 aa).

A signal peptide spans 1 to 23 (MMSLKLLLLVMLLLGASLQVTHA). Intrachain disulfides connect Cys33-Cys57 and Cys34-Cys73.

This sequence belongs to the intercrine beta (chemokine CC) family. Expressed in thymus and also in spleen, lung, lymph node, kidney, small intestine, colon and skin.

It is found in the secreted. In terms of biological role, chemokine, which displays chemotactic activity for T lymphocytes, preferentially Th2 cells, but not monocytes or granulocytes. Therefore plays an important role in a wide range of inflammatory and immunological processes. Acts by binding to CCR4 at T-cell surface. Mediates GM-CSF/CSF2-driven pain and inflammation. In the brain, required to maintain the typical, highly branched morphology of hippocampal microglia under homeostatic conditions. May be important for the appropriate adaptation of microglial morphology and synaptic plasticity to acute lipopolysaccharide (LPS)-induced neuroinflammation. Plays a role in wound healing, mainly by inducing fibroblast migration into the wound. The protein is C-C motif chemokine 17 (CCL17) of Felis catus (Cat).